Here is a 968-residue protein sequence, read N- to C-terminus: RNA polymerase-associated protein RapA (968 aa).

A Helicase ATP-binding domain is found at 163 to 332 (EVGRRYAPRV…FARLRLLDPD (170 aa)). 176 to 183 (DEVGLGKT) is a binding site for ATP. Positions 278–281 (DEAH) match the DEAH box motif. Residues 491–641 (RVDWLIAFLK…AFELTCPSGH (151 aa)) form the Helicase C-terminal domain.

The protein belongs to the SNF2/RAD54 helicase family. RapA subfamily. In terms of assembly, interacts with the RNAP. Has a higher affinity for the core RNAP than for the holoenzyme. Its ATPase activity is stimulated by binding to RNAP.

Transcription regulator that activates transcription by stimulating RNA polymerase (RNAP) recycling in case of stress conditions such as supercoiled DNA or high salt concentrations. Probably acts by releasing the RNAP, when it is trapped or immobilized on tightly supercoiled DNA. Does not activate transcription on linear DNA. Probably not involved in DNA repair. The polypeptide is RNA polymerase-associated protein RapA (Shewanella denitrificans (strain OS217 / ATCC BAA-1090 / DSM 15013)).